Consider the following 476-residue polypeptide: NADH-quinone oxidoreductase subunit N (476 aa).

14 consecutive transmembrane segments (helical) span residues 10 to 30 (AVLP…IGAI), 42 to 62 (LAIA…AVTI), 77 to 97 (FMKV…VDWL), 108 to 128 (AVLV…GDLI), 129 to 149 (ALYL…AINR), 162 to 182 (FVLG…IYGF), 202 to 222 (LVFG…AVPF), 234 to 254 (PTPV…AVFV), 268 to 288 (WQQI…FAAI), 296 to 316 (LLAY…AAGT), 323 to 343 (VLLY…CVLA), 368 to 388 (ALAL…AGFV), 392 to 412 (YVFL…GVVA), and 445 to 465 (AVLA…TPLI).

This sequence belongs to the complex I subunit 2 family. As to quaternary structure, NDH-1 is composed of 14 different subunits. Subunits NuoA, H, J, K, L, M, N constitute the membrane sector of the complex.

The protein localises to the cell inner membrane. The catalysed reaction is a quinone + NADH + 5 H(+)(in) = a quinol + NAD(+) + 4 H(+)(out). In terms of biological role, NDH-1 shuttles electrons from NADH, via FMN and iron-sulfur (Fe-S) centers, to quinones in the respiratory chain. The immediate electron acceptor for the enzyme in this species is believed to be ubiquinone. Couples the redox reaction to proton translocation (for every two electrons transferred, four hydrogen ions are translocated across the cytoplasmic membrane), and thus conserves the redox energy in a proton gradient. The sequence is that of NADH-quinone oxidoreductase subunit N from Azorhizobium caulinodans (strain ATCC 43989 / DSM 5975 / JCM 20966 / LMG 6465 / NBRC 14845 / NCIMB 13405 / ORS 571).